The sequence spans 805 residues: Leucine--tRNA ligase (805 aa).

The short motif at 41-52 is the 'HIGH' region element; it reads PYPSGAGLHVGH. Residues 577-581 carry the 'KMSKS' region motif; the sequence is KMSKS. Lys-580 lines the ATP pocket.

It belongs to the class-I aminoacyl-tRNA synthetase family.

Its subcellular location is the cytoplasm. It catalyses the reaction tRNA(Leu) + L-leucine + ATP = L-leucyl-tRNA(Leu) + AMP + diphosphate. The sequence is that of Leucine--tRNA ligase from Staphylococcus aureus (strain JH1).